We begin with the raw amino-acid sequence, 199 residues long: MSENNGFFLVLEGIDGAGKTSIAFKLRDFLVEKGFNVHYTYEPYNTLYVEALKKKYNEYRDAYLDALTYAADRLVHIRTEILPYLRRGYIVICDRYYYSSAAYQSAQGAPIEWVLEINKYALKPDLTIYLDVDPAIGVKRRKGLNTRFPEYEKLDFLYRVRENYLWLVDKGYMVLVDANREFDKVYRDVEKIVLEHLVF.

13 to 20 is a binding site for ATP; the sequence is GIDGAGKT.

Belongs to the thymidylate kinase family.

It catalyses the reaction dTMP + ATP = dTDP + ADP. This Staphylothermus marinus (strain ATCC 43588 / DSM 3639 / JCM 9404 / F1) protein is Probable thymidylate kinase.